A 1957-amino-acid chain; its full sequence is MHGSVSGYLLVNAEVDSMGGVIDSGGGIGVKTSPRRTAIEKAQAELRQEYDVREERRRELEFLEKGGNPLDFKFGIATSHSVQSTSLTDQQAEHFVNSEVKDSFALTASPHGDSVESSGRPGVPTISEPNTADNLLLFDSENKSVEGERNLRHPNRQNRTSESERSSKAHTNQNTKETEDSAIFRPYARRNRSKISRDPARSSSTDLVQNRGGLATSISIRRGSVEGKGCIPEAANQKDMHTTSVSCPVFANSNGNIVPKNRVSSNSLNTKVDGEPVVRESTAGSKTSLLKDEADISYSKSSAYLPVGESGLAGEKAQLVSTGGSPKAATIAGQKNSSTQLNGLRDSTVEEESLTNRGATGTNGLESESSHANNVEVNVDNERDLYKVDKLDSDEISMQKTLRVEGLLDQTVGEMTKTKIEDETGQSTTIISECIPECEMQMKSVKIENQSHRSTAEMQTKEKSSETEKRLQDGLVVLENDSKVGSILSENPSSTLCSGIPQASVDTSSCTVGNSLLSGTDIEALKHQPSSDAVMLDTVKEDAILEEARIIQAKKKRIAELSCGTAPVEVREKSQWDFVLEEMAWLANDFAQERLWKMTAAAQICHRVALTCQLRFEERNQHRKLKKIASVLSNAILQFWSSVEAEVPGELEETSLGIVKETCQESNCLNGRRCLAAGVKEYASRFLKYNNSSISYHSAAPSTPDNMCDPEILDISMVDQLTEASLFYSVPSGAMEVYLKSIESHLTRCEKSGSSMQEEVDTSAYDTAGDIGYNVTAFDEDEGETSTYYLPGAFESSRSFNISHKKRKNLMKSHSARSYDLGDDLPYVNNTGGSNSSSLMAKRPDSNINAGSVPTRRVRTASRQRVVSPFGCATTGNLPVPSKTDASSGDTSSFQDEYSSLHGGSAVQKGTEVESSVNFEKLLPYDMAETSGRPKKKKKTHQGSAYDQTWHLDPSVHVEQKDHWKKRPENNFDMNGLYGPHSAKKQKTTKQLVENNFDMAIPHTGSIPSPAASQMSNMSNPNKSIKFIGGRDRGRKIKGLKISPGQHGSGNPWSLFEDQALVVLVHDMGPNWELISDAMNSTLKIKCIYRNPTECKDRHKILMDKTAGDGADSAEDSGNSQSYPSTLPGIPKGSARQLFQRLQGPMEEDTLKSHFEKICLIGKKLHYRKTQSVIGVSVVSFVHGIQFSSCTGAGISQSLDIPGLHVSKYSCKSWLGFPENDGRDSKQIVPVHNSQVMALSQVFPNNLNGGVLTPLDVCDASTSGQDVFSLENPGLPMLNQGTPVLPTSGAHPSTPGSSGVVLSNNLPTTSGLQSASVRDGRFNVPRGSLPLDEQHRLQQFNQTLSGRNLQQPSLSTPAAVSGSDRGHRMVPGGNAMGVSGMNRNTPMSRPGFQGMASSAMPNTGSMLSSGMVEIPNTGNIHSGGGASQGNSMIRPREAVQHMMRMQAAQGNSPGIPAFSNLSSGFTNQTTPVQAYPGHLSQQHQMSPQSHVLGNSHHPHLQSPSQATGAQQEAFAIRQRQIHQRYLQQQQQQQQFPASGSMMPHVQQPQGSSVSSSPQNSPQTQPPVSPQPLSMPPVSPSPNINAMAQQKPQKSQLALHGLGRSPQSGTSGVNNQAGKQRQRQLQQSARQHPHQRQPTQGQQLNKQLKGMGRGNMIHQNITVDQSHLNGLTMPQGNQATEKGEIAVPVRPDQQSSVGTTTSTNLQSKPFVSPLSSNHSQQLPKSFPGALPPSPQQQMQLHSDNSIQGQSSPATPCNILSTSSPSIAPAVAPSNHQHLLIHQKQRNQVQSTAQRVVQHNHLGNSELSKKSQAERMPRVPQSVTNTTQTVSMGTTKGMPQASNDLKNIKAVGSTAVPALEPPSCVASVQITASKVVNSSNTDSAGNDPVSTPNQGLAQKHGIKGVTQRQQQSLPSEEKRPKLPEKPTVQNQKHLASEEQPHLEEAQELSSSKPPDTKVE.

Disordered regions lie at residues 108–208, 261–287, 323–373, and 449–469; these read ASPH…TDLV, NRVSSNSLNTKVDGEPVVRESTAGSKT, GGSP…SHAN, and NQSHRSTAEMQTKEKSSETEK. Residues 140-151 show a composition bias toward basic and acidic residues; it reads SENKSVEGERNL. Composition is skewed to polar residues over residues 261 to 270, 333 to 342, and 355 to 372; these read NRVSSNSLNT, GQKNSSTQLN, and TNRGATGTNGLESESSHA. The region spanning 563–641 is the HSA domain; that stretch reads CGTAPVEVRE…LSNAILQFWS (79 aa). Disordered stretches follow at residues 833–909 and 928–950; these read GSNS…AVQK and AETSGRPKKKKKTHQGSAYDQTW. A compositionally biased stretch (polar residues) spans 884 to 898; it reads TDASSGDTSSFQDEY. Residues 1049 to 1105 form the SANT domain; it reads SGNPWSLFEDQALVVLVHDMGPNWELISDAMNSTLKIKCIYRNPTECKDRHKILMDK. Disordered regions lie at residues 1107-1131, 1282-1314, 1344-1367, 1449-1644, 1687-1768, 1804-1840, and 1876-1957; these read AGDGADSAEDSGNSQSYPSTLPGIP, TPVLPTSGAHPSTPGSSGVVLSNNLPTTSGLQS, LSGRNLQQPSLSTPAAVSGSDRGH, QGNS…QQLN, PVRP…IAPA, ELSKKSQAERMPRVPQSVTNTTQTVSMGTTKGMPQAS, and SSNT…TKVE. 6 stretches are compositionally biased toward polar residues: residues 1116–1125, 1290–1314, 1344–1358, 1459–1472, 1479–1492, and 1501–1510; these read DSGNSQSYPS, AHPSTPGSSGVVLSNNLPTTSGLQS, LSGRNLQQPSLSTPA, SNLSSGFTNQTTPV, LSQQHQMSPQSHVL, and QSPSQATGAQ. Composition is skewed to low complexity over residues 1523–1534 and 1545–1562; these read QRYLQQQQQQQQ and VQQPQGSSVSSSPQNSPQ. Pro residues predominate over residues 1563 to 1579; it reads TQPPVSPQPLSMPPVSP. 5 stretches are compositionally biased toward polar residues: residues 1582–1595, 1604–1618, 1635–1644, 1691–1722, and 1734–1758; these read NINAMAQQKPQKSQ, SPQSGTSGVNNQAGK, RQPTQGQQLN, DQQSSVGTTTSTNLQSKPFVSPLSSNHSQQLP, and QQQMQLHSDNSIQGQSSPATPCNIL. Low complexity predominate over residues 1759–1768; it reads STSSPSIAPA. Residues 1805-1815 are compositionally biased toward basic and acidic residues; sequence LSKKSQAERMP. Composition is skewed to polar residues over residues 1819–1832 and 1876–1894; these read QSVTNTTQTVSMGT and SSNTDSAGNDPVSTPNQGL. 2 stretches are compositionally biased toward basic and acidic residues: residues 1913 to 1922 and 1932 to 1942; these read SEEKRPKLPE and LASEEQPHLEE.

This sequence belongs to the EAF1 family. In terms of assembly, component of the NuA4 histone acetyltransferase complex. Interacts with ARP4 and SWC4, and (via HSA domain) with TAF14 and TAF14B. Expressed in leaves.

It is found in the nucleus. Functionally, component of the NuA4 histone acetyltransferase complex which is involved in transcriptional activation of selected genes principally by acetylation of nucleosomal histone H4 and H2A. The chain is Chromatin modification-related protein EAF1 A (EAF1A) from Arabidopsis thaliana (Mouse-ear cress).